The following is a 156-amino-acid chain: Ribosomal RNA large subunit methyltransferase H (156 aa).

S-adenosyl-L-methionine contacts are provided by residues L73, G104, and 123-128 (LSSLTL).

The protein belongs to the RNA methyltransferase RlmH family. Homodimer.

Its subcellular location is the cytoplasm. The catalysed reaction is pseudouridine(1915) in 23S rRNA + S-adenosyl-L-methionine = N(3)-methylpseudouridine(1915) in 23S rRNA + S-adenosyl-L-homocysteine + H(+). Its function is as follows. Specifically methylates the pseudouridine at position 1915 (m3Psi1915) in 23S rRNA. The sequence is that of Ribosomal RNA large subunit methyltransferase H from Ralstonia pickettii (strain 12J).